A 199-amino-acid polypeptide reads, in one-letter code: RNA-free ribonuclease P (199 aa).

This sequence belongs to the HARP family.

It catalyses the reaction Endonucleolytic cleavage of RNA, removing 5'-extranucleotides from tRNA precursor.. Functionally, RNA-free RNase P that catalyzes the removal of the 5'-leader sequence from pre-tRNA to produce the mature 5'-terminus. This Thermococcus onnurineus (strain NA1) protein is RNA-free ribonuclease P.